Reading from the N-terminus, the 99-residue chain is MKIAVVGDLDMTMGFRLAGLEDVYEVKNAEDALNTIRELDNRADIGLIITTERLGEEIRDSISNLKKFIVEIPDKNGAIVREHDPVKTLVRKAVGVELK.

It belongs to the V-ATPase F subunit family. Has multiple subunits with at least A(3), B(3), C, D, E, F, H, I and proteolipid K(x).

It localises to the cell membrane. Functionally, component of the A-type ATP synthase that produces ATP from ADP in the presence of a proton gradient across the membrane. This Methanococcus aeolicus (strain ATCC BAA-1280 / DSM 17508 / OCM 812 / Nankai-3) protein is A-type ATP synthase subunit F.